The sequence spans 548 residues: Membrane protein insertase YidC (548 aa).

A helical membrane pass occupies residues 6-26 (NLLIIALLFVSFMIWQAWEQD). Positions 28–52 (NPQPQQQTTQTTTTAAGSAADQGVP) are disordered. A compositionally biased stretch (low complexity) spans 29–41 (PQPQQQTTQTTTT). Transmembrane regions (helical) follow at residues 345–365 (KFIHSFLGNWGFSIIVITFIV), 420–440 (LGGCFPLIIQMPIFLALYYML), 458–478 (LSAQDPYYILPIIMGATMFFI), and 499–519 (PVIFTVFFLWFPSGLVVYYIV).

This sequence belongs to the OXA1/ALB3/YidC family. Type 1 subfamily. As to quaternary structure, interacts with the Sec translocase complex via SecD. Specifically interacts with transmembrane segments of nascent integral membrane proteins during membrane integration.

It is found in the cell inner membrane. Required for the insertion and/or proper folding and/or complex formation of integral membrane proteins into the membrane. Involved in integration of membrane proteins that insert both dependently and independently of the Sec translocase complex, as well as at least some lipoproteins. Aids folding of multispanning membrane proteins. The protein is Membrane protein insertase YidC of Klebsiella pneumoniae subsp. pneumoniae (strain ATCC 700721 / MGH 78578).